A 195-amino-acid polypeptide reads, in one-letter code: Imidazoleglycerol-phosphate dehydratase (195 aa).

This sequence belongs to the imidazoleglycerol-phosphate dehydratase family.

It localises to the cytoplasm. The catalysed reaction is D-erythro-1-(imidazol-4-yl)glycerol 3-phosphate = 3-(imidazol-4-yl)-2-oxopropyl phosphate + H2O. It participates in amino-acid biosynthesis; L-histidine biosynthesis; L-histidine from 5-phospho-alpha-D-ribose 1-diphosphate: step 6/9. This chain is Imidazoleglycerol-phosphate dehydratase, found in Trichlorobacter lovleyi (strain ATCC BAA-1151 / DSM 17278 / SZ) (Geobacter lovleyi).